The chain runs to 297 residues: Cyclin-dependent kinase 2 (297 aa).

Residues 4-286 (FQKVEKIGEG…AKVALTHPFF (283 aa)) form the Protein kinase domain. ATP contacts are provided by residues 10–18 (IGEGTYGVV), Lys-33, 81–83 (EFL), and Asp-86. Thr-14 bears the Phosphothreonine mark. A Phosphotyrosine modification is found at Tyr-15. Catalysis depends on Asp-127, which acts as the Proton acceptor. ATP contacts are provided by residues 129–132 (KPQN) and Asp-145. Thr-160 carries the phosphothreonine; by CAK modification.

This sequence belongs to the protein kinase superfamily. CMGC Ser/Thr protein kinase family. CDC2/CDKX subfamily. As to quaternary structure, interacts with spdya.

It carries out the reaction L-seryl-[protein] + ATP = O-phospho-L-seryl-[protein] + ADP + H(+). The catalysed reaction is L-threonyl-[protein] + ATP = O-phospho-L-threonyl-[protein] + ADP + H(+). Phosphorylation at Thr-14 or Tyr-15 inactivates the enzyme, while phosphorylation at Thr-160 activates it. Activated by spdya. Functionally, serine/threonine-protein kinase involved in the control of the cell cycle; essential for meiosis, but dispensable for mitosis. Triggers duplication of centrosomes and DNA. Acts at the G1-S transition to promote the E2F transcriptional program and the initiation of DNA synthesis, and modulates G2 progression; controls the timing of entry into mitosis/meiosis by controlling the subsequent activation of cyclin B/CDK1 by phosphorylation, and coordinates the activation of cyclin B/CDK1 at the centrosome and in the nucleus. Crucial role in orchestrating a fine balance between cellular proliferation, cell death, and DNA repair in embryonic stem cells (ESCs). Activity of CDK2 is maximal during S phase and G2; activated by interaction with cyclin E during the early stages of DNA synthesis to permit G1-S transition, and subsequently activated by cyclin A2 (cyclin A1 in germ cells) during the late stages of DNA replication to drive the transition from S phase to mitosis, the G2 phase. This chain is Cyclin-dependent kinase 2 (cdk2), found in Xenopus laevis (African clawed frog).